A 293-amino-acid polypeptide reads, in one-letter code: MNEQTYLLASAVEPVAAENMSWTQTLVLSVVQGLTEFLPISSSGHLRIISELFWGADAGASFTAVVQLGTEAAVLVYFAREIWQILTGWFAGVFNKDRRGRDYKMGWMIIVATIPVVVLGVLGKDLIRDALRNMWITATVLVLFSFVFILAEKVGKKDRGYDELNMRDALVMGFAQCLALIPGVSRSGGTISAGLFMGLNREVAAKFSFLLAIPAVLGSGLYSLPDAFDPSTGQAASGLQLTIGTLVAFLVGYASIAWLMKFVANHSFSWFAAYRIPAGLLVMLLLWLGYLNP.

The next 5 membrane-spanning stretches (helical) occupy residues 107-127 (WMII…KDLI), 134-154 (MWIT…AEKV), 207-227 (FSFL…LPDA), 243-263 (IGTL…MKFV), and 268-288 (FSWF…LLWL).

The protein belongs to the UppP family.

The protein resides in the cell membrane. It carries out the reaction di-trans,octa-cis-undecaprenyl diphosphate + H2O = di-trans,octa-cis-undecaprenyl phosphate + phosphate + H(+). Catalyzes the dephosphorylation of undecaprenyl diphosphate (UPP). Confers resistance to bacitracin. The polypeptide is Undecaprenyl-diphosphatase (Corynebacterium efficiens (strain DSM 44549 / YS-314 / AJ 12310 / JCM 11189 / NBRC 100395)).